The sequence spans 74 residues: Exodeoxyribonuclease 7 small subunit (74 aa).

It belongs to the XseB family. In terms of assembly, heterooligomer composed of large and small subunits.

The protein localises to the cytoplasm. The enzyme catalyses Exonucleolytic cleavage in either 5'- to 3'- or 3'- to 5'-direction to yield nucleoside 5'-phosphates.. Bidirectionally degrades single-stranded DNA into large acid-insoluble oligonucleotides, which are then degraded further into small acid-soluble oligonucleotides. The sequence is that of Exodeoxyribonuclease 7 small subunit from Symbiobacterium thermophilum (strain DSM 24528 / JCM 14929 / IAM 14863 / T).